A 514-amino-acid polypeptide reads, in one-letter code: Histidine ammonia-lyase (514 aa).

Positions C143–G145 form a cross-link, 5-imidazolinone (Cys-Gly). S144 is modified (2,3-didehydroalanine (Ser)).

Belongs to the PAL/histidase family. Post-translationally, contains an active site 4-methylidene-imidazol-5-one (MIO), which is formed autocatalytically by cyclization and dehydration of residues Cys-Ser-Gly.

The protein localises to the cytoplasm. The catalysed reaction is L-histidine = trans-urocanate + NH4(+). The protein operates within amino-acid degradation; L-histidine degradation into L-glutamate; N-formimidoyl-L-glutamate from L-histidine: step 1/3. The polypeptide is Histidine ammonia-lyase (hutH) (Streptomyces griseus).